The following is a 142-amino-acid chain: Large ribosomal subunit protein uL11 (142 aa).

Belongs to the universal ribosomal protein uL11 family. In terms of assembly, part of the ribosomal stalk of the 50S ribosomal subunit. Interacts with L10 and the large rRNA to form the base of the stalk. L10 forms an elongated spine to which L12 dimers bind in a sequential fashion forming a multimeric L10(L12)X complex. One or more lysine residues are methylated.

Forms part of the ribosomal stalk which helps the ribosome interact with GTP-bound translation factors. The sequence is that of Large ribosomal subunit protein uL11 from Shewanella piezotolerans (strain WP3 / JCM 13877).